The chain runs to 502 residues: Glycerol kinase (502 aa).

Thr-13 provides a ligand contact to ADP. Thr-13, Thr-14, and Ser-15 together coordinate ATP. Position 13 (Thr-13) interacts with sn-glycerol 3-phosphate. Residue Arg-17 coordinates ADP. Residues Arg-83, Glu-84, Tyr-135, and Asp-245 each coordinate sn-glycerol 3-phosphate. The glycerol site is built by Arg-83, Glu-84, Tyr-135, Asp-245, and Gln-246. ADP is bound by residues Thr-267 and Gly-310. The ATP site is built by Thr-267, Gly-310, Gln-314, and Gly-411. ADP-binding residues include Gly-411 and Asn-415.

Belongs to the FGGY kinase family. In terms of assembly, homotetramer and homodimer (in equilibrium).

The enzyme catalyses glycerol + ATP = sn-glycerol 3-phosphate + ADP + H(+). Its pathway is polyol metabolism; glycerol degradation via glycerol kinase pathway; sn-glycerol 3-phosphate from glycerol: step 1/1. Its activity is regulated as follows. Activated by phosphorylation and inhibited by fructose 1,6-bisphosphate (FBP). Its function is as follows. Key enzyme in the regulation of glycerol uptake and metabolism. Catalyzes the phosphorylation of glycerol to yield sn-glycerol 3-phosphate. This Lactobacillus delbrueckii subsp. bulgaricus (strain ATCC BAA-365 / Lb-18) protein is Glycerol kinase.